The following is a 390-amino-acid chain: COP9/Signalosome and eIF3 complex-shared subunit 1 (390 aa).

Residues 188-351 enclose the PCI domain; the sequence is QAAKVMTALL…RTLIVSSYQH (164 aa).

It belongs to the eIF-3 subunit M family. As to quaternary structure, component of the eukaryotic translation initiation factor 3 (eIF-3) complex. Within the eIF-3 complex, interacts directly with eif-3.F. Component of the CSN complex, composed of csn-1, csn-2, csn-3, csn-4, csn-5, csn-6 and csn-7. Within the CSN complex, interacts directly with csn-1 and csn-4.

The protein resides in the cytoplasm. Component of the eukaryotic translation initiation factor 3 (eIF-3) complex, which is involved in protein synthesis of a specialized repertoire of mRNAs and, together with other initiation factors, stimulates binding of mRNA and methionyl-tRNAi to the 40S ribosome. The eIF-3 complex specifically targets and initiates translation of a subset of mRNAs involved in cell proliferation (Potential). Component of the COP9 signalosome complex (CSN), a complex involved in various cellular and developmental processes. The CSN complex is an essential regulator of the ubiquitin (Ubl) conjugation pathway by mediating the deneddylation of the cullin subunits of the SCF-type E3 ligase complexes, leading to decrease the Ubl ligase activity of SCF. The CSN complex plays an essential role in embryogenesis and oogenesis and is required to regulate microtubule stability in the early embryo. Mediates mei-1 targeting for degradation at the meiosis to mitosis transition via deneddylation of cul-3. In Caenorhabditis elegans, this protein is COP9/Signalosome and eIF3 complex-shared subunit 1.